A 473-amino-acid polypeptide reads, in one-letter code: MKTDTSTFLAQQIVRLRRRDQIRRLMQRDKTPLAILFMAAVVGTLTGLVGVAFEKAVSWVQNMRIGALVQVADHAFLLWPLAFILSALLAMVGYFLVRKFAPEAGGSGIPEIEGALEELRPVRWWRVLPVKFIGGMGTLGAGMVLGREGPTVQIGGNLGRMVLDVFRMRSAEARHTLLATGAAAGLSAAFNAPLAGILFIIEEMRPQFRYNLISIKAVFTGVIMSSIVFRIFNGEAPIIEVGKLSDAPVNTLWLYLILGIIFGCVGPVFNSLVLRTQDMFQRFHGGEIKKWVLMGGAIGGLCGILGLIEPEAAGGGFNLIPIAAAGNFSVGLLLFIFIARVVTTLLCFSSGAPGGIFAPMLALGTLLGTAFGMAAAVLFPQYHLEAGTFAIAGMGALMAASVRAPLTGIVLVLEMTDNYQLILPMIITCLGATLLAQFLGGKPLYSTILARTLAKQDAEQAAKNQNAPAGENT.

Residues 1–32 (MKTDTSTFLAQQIVRLRRRDQIRRLMQRDKTP) are Cytoplasmic-facing. Residues 33–69 (LAILFMAAVVGTLTGLVGVAFEKAVSWVQNMRIGALV) form a helical membrane-spanning segment. Residues 70–76 (QVADHAF) lie on the Periplasmic side of the membrane. A helical transmembrane segment spans residues 77-100 (LLWPLAFILSALLAMVGYFLVRKF). The Selectivity filter part_1 signature appears at 106 to 110 (GSGIP). Chloride is bound at residue Ser-107. Positions 109–116 (IPEIEGAL) form an intramembrane region, helical. At 117-123 (EELRPVR) the chain is on the cytoplasmic side. The next 2 helical transmembrane spans lie at 124-141 (WWRV…TLGA) and 148-166 (EGPT…LDVF). The Selectivity filter part_2 signature appears at 146-150 (GREGP). Topologically, residues 167–176 (RMRSAEARHT) are cytoplasmic. 2 consecutive intramembrane regions (helical) follow at residues 177–189 (LLAT…LSAA) and 193–201 (PLAGILFII). Residues 202–214 (EEMRPQFRYNLIS) lie on the Cytoplasmic side of the membrane. The helical transmembrane segment at 215 to 232 (IKAVFTGVIMSSIVFRIF) threads the bilayer. Over 233-252 (NGEAPIIEVGKLSDAPVNTL) the chain is Periplasmic. A helical transmembrane segment spans residues 253–281 (WLYLILGIIFGCVGPVFNSLVLRTQDMFQ). The Cytoplasmic segment spans residues 282–287 (RFHGGE). The helical transmembrane segment at 288 to 309 (IKKWVLMGGAIGGLCGILGLIE) threads the bilayer. Over 310-329 (PEAAGGGFNLIPIAAAGNFS) the chain is Periplasmic. 2 helical membrane-spanning segments follow: residues 330–349 (VGLL…LCFS) and 355–376 (GIFA…MAAA). The Selectivity filter part_3 motif lies at 355–359 (GIFAP). The chloride site is built by Ile-356 and Phe-357. Over 377-386 (VLFPQYHLEA) the chain is Periplasmic. The helical intramembrane region spans 387–401 (GTFAIAGMGALMAAS). The segment at residues 402–404 (VRA) is an intramembrane region (note=Loop between two helices). Positions 405-416 (PLTGIVLVLEMT) form an intramembrane region, helical. An intramembrane region (note=Loop between two helices) is located at residues 417–421 (DNYQL). A helical membrane pass occupies residues 422–438 (ILPMIITCLGATLLAQF). The Cytoplasmic portion of the chain corresponds to 439–473 (LGGKPLYSTILARTLAKQDAEQAAKNQNAPAGENT). Tyr-445 is a binding site for chloride.

Belongs to the chloride channel (TC 2.A.49) family. ClcA subfamily. Homodimer.

Its subcellular location is the cell inner membrane. The enzyme catalyses 2 chloride(in) + H(+)(out) = 2 chloride(out) + H(+)(in). In terms of biological role, proton-coupled chloride transporter. Functions as antiport system and exchanges two chloride ions for 1 proton. Probably acts as an electrical shunt for an outwardly-directed proton pump that is linked to amino acid decarboxylation, as part of the extreme acid resistance (XAR) response. In Salmonella agona (strain SL483), this protein is H(+)/Cl(-) exchange transporter ClcA.